We begin with the raw amino-acid sequence, 410 residues long: Sorting nexin-4 (410 aa).

The PX domain occupies 11 to 135; sequence FIIVSDPQKQ…TFLVSSDWDA (125 aa). The a 1,2-diacyl-sn-glycero-3-phospho-(1D-myo-inositol-3-phosphate) site is built by arginine 58, serine 60, lysine 84, and arginine 101. Residues 329–368 are a coiled coil; the sequence is NQEAARREKISKLESKVQALTTEVENAKKVADAFEKEALK.

It belongs to the sorting nexin family.

The protein localises to the cytoplasm. It is found in the cytosol. Its subcellular location is the preautophagosomal structure membrane. It localises to the endosome membrane. Functionally, sorting nexin, involved in the separation or division of vacuoles throughout the entire life cycle of the cells. Involved in retrieval of late-Golgi SNAREs from post-Golgi endosomes to the trans-Golgi network, for cytoplasm to vacuole transport (Cvt), and autophagy of large cargos including mitophagy, pexophagy and glycophagy. The chain is Sorting nexin-4 (SNX4) from Eremothecium gossypii (strain ATCC 10895 / CBS 109.51 / FGSC 9923 / NRRL Y-1056) (Yeast).